The primary structure comprises 121 residues: MNKQKGMTLLEVLVALAIFSLAGLTLLQTTAQQARNAGMMKEKMLASWLADNQQVRLHLNKLWPEKSATGALVTYAGEEWYLSWQGVDTEFSQLRALDIEVRRHKQDTAAIFSLRSYVVHE.

The propeptide at 1–6 (MNKQKG) is leader sequence. N-methylmethionine is present on Met7. Residues 7-27 (MTLLEVLVALAIFSLAGLTLL) form a helical membrane-spanning segment.

Belongs to the GSP I family. Type II secretion is composed of four main components: the outer membrane complex, the inner membrane complex, the cytoplasmic secretion ATPase and the periplasm-spanning pseudopilus. Interacts with core component PulG. Interacts with pseudopilins PulJ and PulK. Cleaved by prepilin peptidase. In terms of processing, methylated by prepilin peptidase at the amino group of the N-terminal methionine once the leader sequence is cleaved by prepilin peptidase.

It is found in the cell inner membrane. Component of the type II secretion system required for the energy-dependent secretion of extracellular factors such as proteases and toxins from the periplasm. Part of the pseudopilus tip complex that is critical for the recognition and binding of secretion substrates. The protein is Type II secretion system protein I (pulI) of Klebsiella michiganensis (strain ATCC 8724 / DSM 4798 / JCM 20051 / NBRC 3318 / NRRL B-199 / KCTC 1686 / BUCSAV 143 / CCM 1901).